Here is a 351-residue protein sequence, read N- to C-terminus: Probable V-type proton ATPase subunit d (351 aa).

This sequence belongs to the V-ATPase V0D/AC39 subunit family. V-ATPase is a heteromultimeric enzyme composed of a peripheral catalytic V1 complex (components A to H) attached to an integral membrane V0 proton pore complex (components: a, c, c', c'' and d).

In terms of biological role, subunit of the integral membrane V0 complex of vacuolar ATPase. Vacuolar ATPase is responsible for acidifying a variety of intracellular compartments in eukaryotic cells, thus providing most of the energy required for transport processes in the vacuolar system. In Oryza sativa subsp. japonica (Rice), this protein is Probable V-type proton ATPase subunit d.